Here is an 822-residue protein sequence, read N- to C-terminus: Probable alpha,alpha-trehalose-phosphate synthase [UDP-forming] 2 (822 aa).

Residues P12–G479 form a glycosyltransferase region.

This sequence in the N-terminal section; belongs to the glycosyltransferase 20 family. In the C-terminal section; belongs to the trehalose phosphatase family.

The catalysed reaction is D-glucose 6-phosphate + UDP-alpha-D-glucose = alpha,alpha-trehalose 6-phosphate + UDP + H(+). The chain is Probable alpha,alpha-trehalose-phosphate synthase [UDP-forming] 2 (TPS2) from Arabidopsis thaliana (Mouse-ear cress).